The sequence spans 757 residues: Protein aardvark (757 aa).

3 disordered regions span residues 39–63 (SSINNNINNNNNNNNNNNSNNDSNN), 122–166 (LEEN…SSIL), and 256–285 (SSNGSTNNHNNNNNNNHHHHSNNGNLIESS). Positions 121–205 (ILEENNNNNN…FNQFNFLEGI (85 aa)) form a coiled coil. 2 stretches are compositionally biased toward low complexity: residues 125–164 (NNNNNNNNNNNNNNNNNNNNNNNNNNNNNNNNNSSSSSSS) and 256–270 (SSNGSTNNHNNNNNN). Positions 310 to 356 (QFDIFLIPTEMLVHLLSFLSANDLWRISLTCKRIWYIVDVFKFWELL) constitute an F-box domain. ARM repeat units follow at residues 454-498 (GGIS…SNDN), 506-548 (GGIQ…VAIE), 549-591 (GGIQ…SAKE), 592-634 (GGIG…ISRQ), 635-678 (NGIQ…IARE), and 679-723 (GGIN…RSGG).

This sequence belongs to the beta-catenin family.

The protein resides in the cytoplasm. Its subcellular location is the cell junction. Its function is as follows. Required to regulate pattern formation during multi-cellular stages of development and for the formation of adherens junctions. Plays a structural role during the regulation of stalk formation. Involved in cell signaling. Required for spore-cell differentiation. Overexpression increases number and size of cell junctions and reduces spore-cell formation. This Dictyostelium discoideum (Social amoeba) protein is Protein aardvark (aarA).